We begin with the raw amino-acid sequence, 325 residues long: Phospho-N-acetylmuramoyl-pentapeptide-transferase (325 aa).

Helical transmembrane passes span 5–25 (VLLLTLILSFVITVILSPIFI), 57–77 (LMILLSILVSSLFVSFQLSIF), 81–101 (VLLLLLVTIGFGVLGFIDDFI), 117–137 (LIGQLVVAVLFYLGLRNMGLS), 146–166 (SLSIDFGWFYLPLVIVMLVGA), 178–198 (GLVAGTGAIAFGAFAIIAWAT), 200–220 (YFEVAIFSAAVVGAVLGFLVF), 227–247 (VFMGDTGSLALGGAIAAIAIM), 252–272 (ILLIIIGGVFVIETLSVIIQV), and 304–324 (VTFWTVGLLFAMLAIYLEVWI).

Belongs to the glycosyltransferase 4 family. MraY subfamily. The cofactor is Mg(2+).

It localises to the cell membrane. The catalysed reaction is UDP-N-acetyl-alpha-D-muramoyl-L-alanyl-gamma-D-glutamyl-meso-2,6-diaminopimeloyl-D-alanyl-D-alanine + di-trans,octa-cis-undecaprenyl phosphate = di-trans,octa-cis-undecaprenyl diphospho-N-acetyl-alpha-D-muramoyl-L-alanyl-D-glutamyl-meso-2,6-diaminopimeloyl-D-alanyl-D-alanine + UMP. It functions in the pathway cell wall biogenesis; peptidoglycan biosynthesis. Functionally, catalyzes the initial step of the lipid cycle reactions in the biosynthesis of the cell wall peptidoglycan: transfers peptidoglycan precursor phospho-MurNAc-pentapeptide from UDP-MurNAc-pentapeptide onto the lipid carrier undecaprenyl phosphate, yielding undecaprenyl-pyrophosphoryl-MurNAc-pentapeptide, known as lipid I. The polypeptide is Phospho-N-acetylmuramoyl-pentapeptide-transferase (Halalkalibacterium halodurans (strain ATCC BAA-125 / DSM 18197 / FERM 7344 / JCM 9153 / C-125) (Bacillus halodurans)).